A 700-amino-acid polypeptide reads, in one-letter code: Polyribonucleotide nucleotidyltransferase (700 aa).

Residues aspartate 484 and aspartate 490 each contribute to the Mg(2+) site. One can recognise a KH domain in the interval 551–610; that stretch reads PRVIRMVVDPEKIREIIGPGGKTISKIIAETGVKIDIEEDGRLYITASDLRSGERAKQMI. In terms of domain architecture, S1 motif spans 620 to 688; it reads GEIYLGKVLR…KLGRISLSRK (69 aa).

It belongs to the polyribonucleotide nucleotidyltransferase family. Requires Mg(2+) as cofactor.

Its subcellular location is the cytoplasm. The catalysed reaction is RNA(n+1) + phosphate = RNA(n) + a ribonucleoside 5'-diphosphate. Its function is as follows. Involved in mRNA degradation. Catalyzes the phosphorolysis of single-stranded polyribonucleotides processively in the 3'- to 5'-direction. This Thermoanaerobacter sp. (strain X514) protein is Polyribonucleotide nucleotidyltransferase.